The sequence spans 207 residues: Small ribosomal subunit protein uS4 (207 aa).

The interval T20–D45 is disordered. Positions M93 to G158 constitute an S4 RNA-binding domain.

It belongs to the universal ribosomal protein uS4 family. Part of the 30S ribosomal subunit. Contacts protein S5. The interaction surface between S4 and S5 is involved in control of translational fidelity.

Functionally, one of the primary rRNA binding proteins, it binds directly to 16S rRNA where it nucleates assembly of the body of the 30S subunit. In terms of biological role, with S5 and S12 plays an important role in translational accuracy. This Leifsonia xyli subsp. xyli (strain CTCB07) protein is Small ribosomal subunit protein uS4.